The primary structure comprises 84 residues: MAHKKGGGSTKNGRDSNPKYLGVKAAGGSTVSAGTIILRQRGTVIKPGTNAGIGRDHTIFSLVDGVVTFRNGRNNKKQVDILPS.

A disordered region spans residues 1–21 (MAHKKGGGSTKNGRDSNPKYL).

This sequence belongs to the bacterial ribosomal protein bL27 family.

The chain is Large ribosomal subunit protein bL27 from Chlorobium luteolum (strain DSM 273 / BCRC 81028 / 2530) (Pelodictyon luteolum).